We begin with the raw amino-acid sequence, 323 residues long: Transcriptional regulator protein Pur-beta-A (323 aa).

3 disordered regions span residues 1–34 (MADG…QELA), 100–122 (SPEQ…PRRA), and 286–323 (QERQ…VDDD). A2 carries the N-acetylalanine modification. The span at 9–19 (ERGGSSGGPGG) shows a compositional bias: gly residues. A compositionally biased stretch (basic and acidic residues) spans 24–34 (MSREQETQELA). The tract at residues 27–257 (EQETQELATK…LRVSEVKPSY (231 aa)) is DNA-binding. The segment covering 286–305 (QERQRDKMYERRGPGDRERS) has biased composition (basic and acidic residues). Residues 313-323 (DDSETEDVDDD) show a composition bias toward acidic residues.

Belongs to the PUR DNA-binding protein family.

Its subcellular location is the nucleus. Functionally, transcriptional regulator which can act as an activator or a repressor. The chain is Transcriptional regulator protein Pur-beta-A (purb-a) from Xenopus laevis (African clawed frog).